Consider the following 784-residue polypeptide: Armadillo repeat-containing X-linked protein 2 (784 aa).

Residues 1–6 (MSRARD) are Mitochondrial intermembrane-facing. Mitochondrion outer membrane (MOM)-targeting sequence stretches follow at residues 1–6 (MSRARD) and 26–40 (KYTR…RLTK). A helical; Signal-anchor transmembrane segment spans residues 7-27 (AGCVAAGIVIGASAWYCVYKY). The Cytoplasmic portion of the chain corresponds to 28-784 (TRGKDQKKKR…VKVIKLVNKF (757 aa)). 3 disordered regions span residues 328–353 (TSGG…RTAS), 388–461 (HSGA…ELGM), and 488–522 (PESE…TIPM). Positions 396–418 (GTSGSSKTAATGKKAAPGAHTGA) are enriched in low complexity. Over residues 488–508 (PESEEGESGWTDTESDSDSEP) the composition is skewed to acidic residues. ARM repeat units lie at residues 528–568 (PYEI…NNAN), 570–609 (SCNQ…NLSE), and 650–689 (ITND…NFAE).

Belongs to the eutherian X-chromosome-specific Armcx family. In terms of tissue distribution, widely expressed in the adult nervous tissue, especially in the forebrain, including the cerebral cortex, hippocampus and thalamus.

It localises to the mitochondrion. It is found in the mitochondrion outer membrane. In terms of biological role, may regulate the dynamics and distribution of mitochondria in neural cells. This chain is Armadillo repeat-containing X-linked protein 2 (Armcx2), found in Mus musculus (Mouse).